A 246-amino-acid chain; its full sequence is Ribosomal RNA small subunit methyltransferase J (246 aa).

S-adenosyl-L-methionine-binding positions include 115 to 116 and Asp-169; that span reads ER.

Belongs to the methyltransferase superfamily. RsmJ family.

Its subcellular location is the cytoplasm. It carries out the reaction guanosine(1516) in 16S rRNA + S-adenosyl-L-methionine = N(2)-methylguanosine(1516) in 16S rRNA + S-adenosyl-L-homocysteine + H(+). Specifically methylates the guanosine in position 1516 of 16S rRNA. This is Ribosomal RNA small subunit methyltransferase J from Buchnera aphidicola subsp. Acyrthosiphon pisum (strain 5A).